Here is a 438-residue protein sequence, read N- to C-terminus: Tol-Pal system protein TolB (438 aa).

An N-terminal signal peptide occupies residues 1–36 (MTPAFRRADLTGFLRTYGAALILLLAAMLAWQPAQA).

The protein belongs to the TolB family. In terms of assembly, the Tol-Pal system is composed of five core proteins: the inner membrane proteins TolA, TolQ and TolR, the periplasmic protein TolB and the outer membrane protein Pal. They form a network linking the inner and outer membranes and the peptidoglycan layer.

The protein localises to the periplasm. Its function is as follows. Part of the Tol-Pal system, which plays a role in outer membrane invagination during cell division and is important for maintaining outer membrane integrity. The chain is Tol-Pal system protein TolB from Bordetella pertussis (strain Tohama I / ATCC BAA-589 / NCTC 13251).